The following is a 204-amino-acid chain: Venom allergen 5 (204 aa).

4 cysteine pairs are disulfide-bonded: Cys4–Cys17, Cys8–Cys101, Cys26–Cys94, and Cys170–Cys187. The SCP domain maps to 45–189; it reads LKEHNDFRQK…WHKHYLVCNY (145 aa).

It belongs to the CRISP family. Venom allergen 5-like subfamily. As to expression, expressed by the venom gland.

It localises to the secreted. In terms of biological role, may have an ancestral function in the promotion of ovum fertilization by sperm. The sequence is that of Venom allergen 5 from Vespula flavopilosa (Downy yellowjacket).